The following is a 48-amino-acid chain: Large ribosomal subunit protein bL33A (48 aa).

Belongs to the bacterial ribosomal protein bL33 family.

The chain is Large ribosomal subunit protein bL33A from Bacillus mycoides (strain KBAB4) (Bacillus weihenstephanensis).